The chain runs to 395 residues: ATP phosphoribosyltransferase regulatory subunit (395 aa).

It belongs to the class-II aminoacyl-tRNA synthetase family. HisZ subfamily. Heteromultimer composed of HisG and HisZ subunits.

It is found in the cytoplasm. The protein operates within amino-acid biosynthesis; L-histidine biosynthesis; L-histidine from 5-phospho-alpha-D-ribose 1-diphosphate: step 1/9. Functionally, required for the first step of histidine biosynthesis. May allow the feedback regulation of ATP phosphoribosyltransferase activity by histidine. The polypeptide is ATP phosphoribosyltransferase regulatory subunit (Pseudomonas fluorescens (strain Pf0-1)).